The chain runs to 395 residues: Elongation factor Tu (395 aa).

The tr-type G domain occupies 10 to 204; the sequence is KPHVNIGTIG…EVDAYIPTPE (195 aa). Positions 19–26 are G1; sequence GHVDHGKT. 19-26 contributes to the GTP binding site; sequence GHVDHGKT. Position 26 (Thr26) interacts with Mg(2+). The interval 60-64 is G2; that stretch reads GITIS. The segment at 81 to 84 is G3; it reads DCPG. Residues 81–85 and 136–139 each bind GTP; these read DCPGH and NKCD. The tract at residues 136–139 is G4; that stretch reads NKCD. The tract at residues 174-176 is G5; it reads SAL.

This sequence belongs to the TRAFAC class translation factor GTPase superfamily. Classic translation factor GTPase family. EF-Tu/EF-1A subfamily. In terms of assembly, monomer.

The protein localises to the cytoplasm. The enzyme catalyses GTP + H2O = GDP + phosphate + H(+). Functionally, GTP hydrolase that promotes the GTP-dependent binding of aminoacyl-tRNA to the A-site of ribosomes during protein biosynthesis. This chain is Elongation factor Tu, found in Bacillus anthracis (strain A0248).